We begin with the raw amino-acid sequence, 489 residues long: Rhamnulokinase (489 aa).

13–17 (ASSGR) is a binding site for ATP. Cysteines 68 and 222 form a disulfide. Residues G83 and 236–238 (HDT) each bind substrate. D237 (proton acceptor) is an active-site residue. T259 provides a ligand contact to ATP. N296 provides a ligand contact to substrate. Q304 is a binding site for ATP. A disulfide bond links C353 and C370. Position 402 (G402) interacts with ATP. A disulfide bridge connects residues C413 and C417.

It belongs to the rhamnulokinase family. Mg(2+) is required as a cofactor.

It carries out the reaction L-rhamnulose + ATP = L-rhamnulose 1-phosphate + ADP + H(+). The protein operates within carbohydrate degradation; L-rhamnose degradation; glycerone phosphate from L-rhamnose: step 2/3. In terms of biological role, involved in the catabolism of L-rhamnose (6-deoxy-L-mannose). Catalyzes the transfer of the gamma-phosphate group from ATP to the 1-hydroxyl group of L-rhamnulose to yield L-rhamnulose 1-phosphate. This chain is Rhamnulokinase, found in Shigella flexneri serotype 5b (strain 8401).